The following is a 319-amino-acid chain: Ribonuclease Z (319 aa).

Positions 62, 64, 66, 67, 145, 216, and 274 each coordinate Zn(2+). Aspartate 66 functions as the Proton acceptor in the catalytic mechanism.

This sequence belongs to the RNase Z family. Homodimer. It depends on Zn(2+) as a cofactor.

It catalyses the reaction Endonucleolytic cleavage of RNA, removing extra 3' nucleotides from tRNA precursor, generating 3' termini of tRNAs. A 3'-hydroxy group is left at the tRNA terminus and a 5'-phosphoryl group is left at the trailer molecule.. In terms of biological role, zinc phosphodiesterase, which displays some tRNA 3'-processing endonuclease activity. Probably involved in tRNA maturation, by removing a 3'-trailer from precursor tRNA. In Parasynechococcus marenigrum (strain WH8102), this protein is Ribonuclease Z.